The primary structure comprises 70 residues: Small ribosomal subunit protein bS21 (70 aa).

It belongs to the bacterial ribosomal protein bS21 family.

The polypeptide is Small ribosomal subunit protein bS21 (Nitratidesulfovibrio vulgaris (strain ATCC 29579 / DSM 644 / CCUG 34227 / NCIMB 8303 / VKM B-1760 / Hildenborough) (Desulfovibrio vulgaris)).